A 192-amino-acid chain; its full sequence is MFQIELDEEPVAPKVLEFFKNLPENATAEQSLETFQKTFSFLHENVLEKYTSDLFTPSTLKEELDEQLAQAENNAQSQLSELLKNTKRFVLNYDNDRPEDLEAPEYFTQLVDGVLDKKEDLEANISKYLTKTWSFSRLTLVEQAILQVSSYEILYTETPDVVAVNEAVELSKDFSDEKSSRFINGVLTNFLK.

This sequence belongs to the NusB family.

Its function is as follows. Involved in transcription antitermination. Required for transcription of ribosomal RNA (rRNA) genes. Binds specifically to the boxA antiterminator sequence of the ribosomal RNA (rrn) operons. The protein is Transcription antitermination protein NusB of Lactococcus lactis subsp. lactis (strain IL1403) (Streptococcus lactis).